We begin with the raw amino-acid sequence, 44 residues long: Protein PsbN (44 aa).

A helical transmembrane segment spans residues 6 to 26 (FFYGVFLWCLLISVTGYSIYI).

It belongs to the PsbN family.

Its subcellular location is the plastid. It is found in the chloroplast thylakoid membrane. Functionally, may play a role in photosystem I and II biogenesis. The chain is Protein PsbN from Ostreococcus tauri.